The chain runs to 365 residues: Palmitoyltransferase ZDHHC20 (365 aa).

Topologically, residues 1-14 (MAPCTLWRCCQRTV) are cytoplasmic. The helical transmembrane segment at 15-35 (GWVPVLFITFVVVWSYYAYVV) threads the bilayer. Residues 36 to 53 (ELCVFTLSGNGENGKAVV) lie on the Lumenal side of the membrane. A helical transmembrane segment spans residues 54 to 74 (YLVAFHLFFVMFVWSYWMTIF). Residues 75–169 (TSPASPSKEF…NNCVGFSNYK (95 aa)) lie on the Cytoplasmic side of the membrane. The DHHC domain maps to 126–176 (RYCERCQLIKPDRAHHCSACDMCILKMDHHCPWVNNCVGFSNYKFFLLFLF). 2 residues coordinate Zn(2+): Cys128 and Cys131. Residues Lys135 and 140–143 (HHCS) each bind substrate. Positions 141, 142, 145, 148, and 155 each coordinate Zn(2+). The S-palmitoyl cysteine intermediate role is filled by Cys156. Zn(2+) is bound at residue Cys162. A helical membrane pass occupies residues 170–190 (FFLLFLFYSLLYCLFVATTVL). At 191–207 (QYFIKFWTNELTDTRAK) the chain is on the lumenal side. Residues 208–231 (FHVLFLFFVSTMFFISVLSLLSYH) traverse the membrane as a helical segment. Residues 232-365 (CWLVGKNRTT…NNHVTVAIEN (134 aa)) are Cytoplasmic-facing. The interval 301–365 (PEQASVSNQS…NNHVTVAIEN (65 aa)) is disordered. Residues 302 to 321 (EQASVSNQSESARSIGSNQP) show a composition bias toward polar residues. Phosphoserine is present on residues Ser305 and Ser330.

Belongs to the DHHC palmitoyltransferase family. Autopalmitoylated (in vitro).

It is found in the golgi apparatus membrane. Its subcellular location is the cell membrane. It localises to the cytoplasm. The protein localises to the perinuclear region. The protein resides in the endoplasmic reticulum membrane. It is found in the endoplasmic reticulum-Golgi intermediate compartment membrane. It carries out the reaction L-cysteinyl-[protein] + hexadecanoyl-CoA = S-hexadecanoyl-L-cysteinyl-[protein] + CoA. The catalysed reaction is L-cysteinyl-[protein] + tetradecanoyl-CoA = S-tetradecanoyl-L-cysteinyl-[protein] + CoA. The enzyme catalyses L-cysteinyl-[protein] + octadecanoyl-CoA = S-octadecanoyl-L-cysteinyl-[protein] + CoA. In terms of biological role, palmitoyltransferase that could catalyze the addition of palmitate onto various protein substrates. Catalyzes palmitoylation of Cys residues in the cytoplasmic C-terminus of EGFR, and modulates the duration of EGFR signaling by modulating palmitoylation-dependent EGFR internalization and degradation. Has a preference for acyl-CoA with C16 fatty acid chains. Can also utilize acyl-CoA with C14 and C18 fatty acid chains. May palmitoylate CALHM1 subunit of gustatory voltage-gated ion channels and modulate channel gating and kinetics. The polypeptide is Palmitoyltransferase ZDHHC20 (Bos taurus (Bovine)).